The sequence spans 179 residues: Large ribosomal subunit protein uL5 (179 aa).

The protein belongs to the universal ribosomal protein uL5 family. In terms of assembly, part of the 50S ribosomal subunit; part of the 5S rRNA/L5/L18/L25 subcomplex. Contacts the 5S rRNA and the P site tRNA. Forms a bridge to the 30S subunit in the 70S ribosome.

In terms of biological role, this is one of the proteins that bind and probably mediate the attachment of the 5S RNA into the large ribosomal subunit, where it forms part of the central protuberance. In the 70S ribosome it contacts protein S13 of the 30S subunit (bridge B1b), connecting the 2 subunits; this bridge is implicated in subunit movement. Contacts the P site tRNA; the 5S rRNA and some of its associated proteins might help stabilize positioning of ribosome-bound tRNAs. The chain is Large ribosomal subunit protein uL5 from Halorhodospira halophila (strain DSM 244 / SL1) (Ectothiorhodospira halophila (strain DSM 244 / SL1)).